The sequence spans 269 residues: ATP synthase subunit gamma, mitochondrial (269 aa).

As to quaternary structure, F-type ATP synthases have 2 components, the catalytic core F(1) and the membrane-embedded component F(0), linked together by a central stalk and a peripheral stalk. The central stalk, also called rotor shaft, is often seen as part of F(1). The peripheral stalk is seen as part of F(0). F(0) contains the membrane channel next to the rotor. F-type ATP synthases form dimers but each monomer functions independently in ATP generation. The dimer consists of 18 different polypeptides: ATP1 (subunit alpha, part of F(1), 3 molecules per monomer), ATP2 (subunit beta, part of F(1), 3 molecules per monomer), ATP3 (subunit gamma, part of the central stalk), ATP4 (subunit b, part of the peripheral stalk), ATP5/OSCP (subunit 5/OSCP, part of the peripheral stalk), ATP6 (subunit a, part of the peripheral stalk), ATP7 (subunit d, part of the peripheral stalk), ATP8 (subunit 8, part of the peripheral stalk), OLI1 (subunit c, part of the rotor, 10 molecules per monomer), ATP14 (subunit h, part of the peripheral stalk), ATP15 (subunit epsilon, part of the central stalk), ATP16 (subunit delta, part of the central stalk), ATP17 (subunit f, part of the peripheral stalk), ATP18 (subunit i/j, part of the peripheral stalk). Dimer-specific subunits are ATP19 (subunit k, at interface between monomers), ATP20 (subunit g, at interface between monomers), TIM11 (subunit e, at interface between monomers). Also contains subunit L.

Its subcellular location is the mitochondrion inner membrane. In terms of biological role, mitochondrial membrane ATP synthase (F(1)F(0) ATP synthase or Complex V) produces ATP from ADP in the presence of a proton gradient across the membrane which is generated by electron transport complexes of the respiratory chain. F-type ATP synthases consist of two structural domains, F(1) - containing the extramembraneous catalytic core, and F(0) - containing the membrane proton channel, linked together by a central stalk and a peripheral stalk. During catalysis, ATP synthesis in the catalytic domain of F(1) is coupled via a rotary mechanism of the central stalk subunits to proton translocation. Part of the complex F(1) domain and the central stalk which is part of the complex rotary element. The gamma/ATP3 subunit protrudes into the catalytic domain formed of alpha/ATP1(3)beta/ATP2(3). Rotation of the central stalk against the surrounding alpha/ATP1(3)beta/ATP2(3) subunits leads to hydrolysis of ATP in three separate catalytic sites on the beta/ATP2 subunits. The chain is ATP synthase subunit gamma, mitochondrial from Pichia angusta (Yeast).